The chain runs to 525 residues: Probable histidine ammonia-lyase (525 aa).

A cross-link (5-imidazolinone (Ala-Gly)) is located at residues 145–147; the sequence is ASG. At Ser-146 the chain carries 2,3-didehydroalanine (Ser).

Belongs to the PAL/histidase family. Post-translationally, contains an active site 4-methylidene-imidazol-5-one (MIO), which is formed autocatalytically by cyclization and dehydration of residues Ala-Ser-Gly.

It localises to the cytoplasm. It carries out the reaction L-histidine = trans-urocanate + NH4(+). Its pathway is amino-acid degradation; L-histidine degradation into L-glutamate; N-formimidoyl-L-glutamate from L-histidine: step 1/3. This is Probable histidine ammonia-lyase from Halobacterium salinarum (strain ATCC 29341 / DSM 671 / R1).